Consider the following 156-residue polypeptide: ATP synthase subunit b', organellar chromatophore (156 aa).

A helical membrane pass occupies residues 23 to 43 (TLPLMAIQVVFLTFILNAIFF).

Belongs to the ATPase B chain family. F-type ATPases have 2 components, F(1) - the catalytic core - and F(0) - the membrane proton channel. F(1) has five subunits: alpha(3), beta(3), gamma(1), delta(1), epsilon(1). F(0) has four main subunits: a(1), b(1), b'(1) and c(10-14). The alpha and beta chains form an alternating ring which encloses part of the gamma chain. F(1) is attached to F(0) by a central stalk formed by the gamma and epsilon chains, while a peripheral stalk is formed by the delta, b and b' chains.

The protein localises to the plastid. Its subcellular location is the organellar chromatophore thylakoid membrane. Its function is as follows. F(1)F(0) ATP synthase produces ATP from ADP in the presence of a proton or sodium gradient. F-type ATPases consist of two structural domains, F(1) containing the extramembraneous catalytic core and F(0) containing the membrane proton channel, linked together by a central stalk and a peripheral stalk. During catalysis, ATP synthesis in the catalytic domain of F(1) is coupled via a rotary mechanism of the central stalk subunits to proton translocation. In terms of biological role, component of the F(0) channel, it forms part of the peripheral stalk, linking F(1) to F(0). The b'-subunit is a diverged and duplicated form of b found in plants and photosynthetic bacteria. The polypeptide is ATP synthase subunit b', organellar chromatophore (Paulinella chromatophora).